Here is a 315-residue protein sequence, read N- to C-terminus: ATP synthase gamma chain (315 aa).

The protein belongs to the ATPase gamma chain family. As to quaternary structure, F-type ATPases have 2 components, CF(1) - the catalytic core - and CF(0) - the membrane proton channel. CF(1) has five subunits: alpha(3), beta(3), gamma(1), delta(1), epsilon(1). CF(0) has three main subunits: a, b and c.

Its subcellular location is the cellular thylakoid membrane. Produces ATP from ADP in the presence of a proton gradient across the membrane. The gamma chain is believed to be important in regulating ATPase activity and the flow of protons through the CF(0) complex. The sequence is that of ATP synthase gamma chain from Trichormus variabilis (strain ATCC 29413 / PCC 7937) (Anabaena variabilis).